A 145-amino-acid polypeptide reads, in one-letter code: MIALIQRVKQAKVDVDGQTIGAIDKGLLVLLGVEREDDQAKMEKLATKVMSYRIFSDEDGKMNLNLKQVGGSLLVVSQFTLAADTGRGLRPSFSGAGTPEQAKQLYQAFVDYCAAQGVPVQTGEFAADMQVSLVNDGPVTFNLQV.

The short motif at Gly-137 to Pro-138 is the Gly-cisPro motif, important for rejection of L-amino acids element.

It belongs to the DTD family. In terms of assembly, homodimer.

The protein localises to the cytoplasm. It catalyses the reaction glycyl-tRNA(Ala) + H2O = tRNA(Ala) + glycine + H(+). The enzyme catalyses a D-aminoacyl-tRNA + H2O = a tRNA + a D-alpha-amino acid + H(+). Functionally, an aminoacyl-tRNA editing enzyme that deacylates mischarged D-aminoacyl-tRNAs. Also deacylates mischarged glycyl-tRNA(Ala), protecting cells against glycine mischarging by AlaRS. Acts via tRNA-based rather than protein-based catalysis; rejects L-amino acids rather than detecting D-amino acids in the active site. By recycling D-aminoacyl-tRNA to D-amino acids and free tRNA molecules, this enzyme counteracts the toxicity associated with the formation of D-aminoacyl-tRNA entities in vivo and helps enforce protein L-homochirality. The chain is D-aminoacyl-tRNA deacylase from Shewanella loihica (strain ATCC BAA-1088 / PV-4).